The sequence spans 830 residues: ABC transporter G family member STR (830 aa).

The Cytoplasmic segment spans residues Met1 to Pro551. The ABC transporter domain occupies Leu46 to Asp297. Gly90–Ser97 serves as a coordination point for ATP. Disordered stretches follow at residues Asp333–Lys356, Ser368–Ser422, and Ser471–Pro491. The segment covering Ser368 to Gln378 has biased composition (polar residues). Acidic residues predominate over residues Asp395–Phe405. The segment covering Ser471 to Thr483 has biased composition (low complexity). Residues Glu552 to Phe572 traverse the membrane as a helical segment. The Extracellular portion of the chain corresponds to Lys573–Asn588. The helical transmembrane segment at Phe589–Ile609 threads the bilayer. Residues Gln610–Val630 are Cytoplasmic-facing. Residues Ile631–Ile651 form a helical membrane-spanning segment. The Extracellular segment spans residues Thr652–Ser661. N-linked (GlcNAc...) asparagine glycosylation occurs at Asn659. A helical membrane pass occupies residues Ile662 to Leu682. The Cytoplasmic portion of the chain corresponds to Val683–Tyr690. Residues Ile691 to Phe711 form a helical membrane-spanning segment. Over Leu712–Asn798 the chain is Extracellular. Residues Asn771 and Asn780 are each glycosylated (N-linked (GlcNAc...) asparagine). A helical transmembrane segment spans residues Ile799–Val819. At Val820–Lys830 the chain is on the cytoplasmic side.

The protein belongs to the ABC transporter superfamily. ABCG family. Stunted arbuscule (STR) subfamily. Heterodimerizes with STR2; the resulting transporter is located in the peri-arbuscular membrane.

It is found in the cell membrane. Its function is as follows. Together with STR2, required for arbuscule development in arbuscular mycorrhizal (AM) symbiosis. The sequence is that of ABC transporter G family member STR from Petunia hybrida (Petunia).